The primary structure comprises 190 residues: Adenylate kinase (190 aa).

ATP is bound at residue 12–17; that stretch reads GSGKTT. Positions 34 to 63 are NMP; sequence STGDLLREEVASGSEYGKTIDSFISKGNLV. Residues threonine 35, arginine 40, 61–63, 88–91, and glutamine 95 each bind AMP; these read NLV and GYPR. The segment at 130-136 is LID; sequence GRARGAD. ATP is bound at residue arginine 131. The AMP site is built by arginine 133 and arginine 145. Arginine 173 is an ATP binding site.

This sequence belongs to the adenylate kinase family. As to quaternary structure, monomer.

It is found in the cytoplasm. The catalysed reaction is AMP + ATP = 2 ADP. It functions in the pathway purine metabolism; AMP biosynthesis via salvage pathway; AMP from ADP: step 1/1. Functionally, catalyzes the reversible transfer of the terminal phosphate group between ATP and AMP. Plays an important role in cellular energy homeostasis and in adenine nucleotide metabolism. The polypeptide is Adenylate kinase (Helicobacter hepaticus (strain ATCC 51449 / 3B1)).